The sequence spans 252 residues: Large ribosomal subunit protein uL4 (252 aa).

The protein belongs to the universal ribosomal protein uL4 family. In terms of assembly, part of the 50S ribosomal subunit.

One of the primary rRNA binding proteins, this protein initially binds near the 5'-end of the 23S rRNA. It is important during the early stages of 50S assembly. It makes multiple contacts with different domains of the 23S rRNA in the assembled 50S subunit and ribosome. Its function is as follows. Forms part of the polypeptide exit tunnel. The chain is Large ribosomal subunit protein uL4 from Methanococcus maripaludis (strain C6 / ATCC BAA-1332).